Here is a 946-residue protein sequence, read N- to C-terminus: Rho GTPase-activating protein 4 (946 aa).

The F-BAR domain maps to 19-317; sequence TQVKEMRWQL…AVEALDPPGD (299 aa). Positions 128 to 195 form a coiled coil; it reads LAQRLSHIAE…REAERQEEKR (68 aa). Residues 187–196 show a composition bias toward basic and acidic residues; sequence EAERQEEKRA. Disordered stretches follow at residues 187–220 and 402–435; these read EAERQEEKRAGRSVPTTTAGATEAGPLRKSSLKK and LDSFQTSPSTESLKSTSSDPGSRQAGRRRGQQQE. 2 stretches are compositionally biased toward low complexity: residues 202–211 and 407–419; these read TTTAGATEAG and TSPSTESLKSTSS. Residues 507 to 695 enclose the Rho-GAP domain; it reads GDMEKFIQSS…TLIVQPDRVF (189 aa). The SH3 domain occupies 746–805; it reads EGVVEAVACFAYTGRTAQELSFRRGDVLRLHERASSDWWRGEHNGMRGLIPHKYITLPAG. A phosphoserine mark is found at Ser-860, Ser-901, and Ser-906. Residues 885 to 946 form a disordered region; sequence KTSVRQGLGP…QGLDTTPKPH (62 aa). Residues 901 to 910 show a composition bias toward pro residues; that stretch reads SPGPRSPKAP. Over residues 924-934 the composition is skewed to low complexity; it reads GPGAPASPSAS.

As to quaternary structure, interacts with NCKAP1L. Predominantly in hematopoietic cells (spleen, thymus and leukocytes); low levels in placenta, lung and various fetal tissues.

The protein localises to the cytoplasm. Its function is as follows. Inhibitory effect on stress fiber organization. May down-regulate Rho-like GTPase in hematopoietic cells. The chain is Rho GTPase-activating protein 4 from Homo sapiens (Human).